The sequence spans 130 residues: DNA-directed RNA polymerase subunit omega (130 aa).

The tract at residues 109–130 is disordered; it reads EEELLKGLEGLAPPEEQPEEDE.

Belongs to the RNA polymerase subunit omega family. As to quaternary structure, the RNAP catalytic core consists of 2 alpha, 1 beta, 1 beta' and 1 omega subunit. When a sigma factor is associated with the core the holoenzyme is formed, which can initiate transcription.

The enzyme catalyses RNA(n) + a ribonucleoside 5'-triphosphate = RNA(n+1) + diphosphate. In terms of biological role, promotes RNA polymerase assembly. Latches the N- and C-terminal regions of the beta' subunit thereby facilitating its interaction with the beta and alpha subunits. The protein is DNA-directed RNA polymerase subunit omega of Rhodopseudomonas palustris (strain BisA53).